The following is a 388-amino-acid chain: Tryptophan synthase beta chain (388 aa).

Position 86 is an N6-(pyridoxal phosphate)lysine (Lys86).

This sequence belongs to the TrpB family. As to quaternary structure, tetramer of two alpha and two beta chains. It depends on pyridoxal 5'-phosphate as a cofactor.

It carries out the reaction (1S,2R)-1-C-(indol-3-yl)glycerol 3-phosphate + L-serine = D-glyceraldehyde 3-phosphate + L-tryptophan + H2O. It participates in amino-acid biosynthesis; L-tryptophan biosynthesis; L-tryptophan from chorismate: step 5/5. Functionally, the beta subunit is responsible for the synthesis of L-tryptophan from indole and L-serine. The chain is Tryptophan synthase beta chain (trpB) from Buchnera aphidicola subsp. Acyrthosiphon pisum (strain APS) (Acyrthosiphon pisum symbiotic bacterium).